A 429-amino-acid chain; its full sequence is Adenylosuccinate synthetase (429 aa).

Residues 12 to 18 and 40 to 42 contribute to the GTP site; these read GDEGKGK and GHT. Asp-13 serves as the catalytic Proton acceptor. Mg(2+) contacts are provided by Asp-13 and Gly-40. Residues 13 to 16, 38 to 41, Thr-128, Arg-142, Gln-223, Thr-238, and Arg-302 contribute to the IMP site; these read DEGK and NAGH. Residue His-41 is the Proton donor of the active site. 298–304 serves as a coordination point for substrate; that stretch reads TTTGRAR. GTP-binding positions include Arg-304, 330–332, and 412–414; these read SID and SVG.

Belongs to the adenylosuccinate synthetase family. As to quaternary structure, homodimer. Requires Mg(2+) as cofactor.

The protein resides in the cytoplasm. The catalysed reaction is IMP + L-aspartate + GTP = N(6)-(1,2-dicarboxyethyl)-AMP + GDP + phosphate + 2 H(+). The protein operates within purine metabolism; AMP biosynthesis via de novo pathway; AMP from IMP: step 1/2. Functionally, plays an important role in the de novo pathway of purine nucleotide biosynthesis. Catalyzes the first committed step in the biosynthesis of AMP from IMP. This chain is Adenylosuccinate synthetase, found in Oceanobacillus iheyensis (strain DSM 14371 / CIP 107618 / JCM 11309 / KCTC 3954 / HTE831).